A 279-amino-acid chain; its full sequence is B3 domain-containing protein Os05g0481400 (279 aa).

The disordered stretch occupies residues 45-68 (ARLQKSTRASPKPRKKFEVGATEV). A DNA-binding region (TF-B3) is located at residues 139 to 230 (FVKTMVRSHV…RFKIYIIKAV (92 aa)). Acidic residues-rich tracts occupy residues 233–244 (DANESEPADEEA) and 252–262 (TEDAAEQDDSP). The interval 233–279 (DANESEPADEEAIGDKDTSTEDAAEQDDSPNAEPLKGTKRRKLRGRR) is disordered. The segment covering 269-279 (GTKRRKLRGRR) has biased composition (basic residues).

Its subcellular location is the nucleus. In Oryza sativa subsp. japonica (Rice), this protein is B3 domain-containing protein Os05g0481400.